The chain runs to 283 residues: Ribosomal RNA small subunit methyltransferase A (283 aa).

S-adenosyl-L-methionine-binding residues include Asn-29, Leu-31, Gly-56, Glu-77, Asp-102, and Asn-123.

This sequence belongs to the class I-like SAM-binding methyltransferase superfamily. rRNA adenine N(6)-methyltransferase family. RsmA subfamily.

The protein resides in the cytoplasm. The enzyme catalyses adenosine(1518)/adenosine(1519) in 16S rRNA + 4 S-adenosyl-L-methionine = N(6)-dimethyladenosine(1518)/N(6)-dimethyladenosine(1519) in 16S rRNA + 4 S-adenosyl-L-homocysteine + 4 H(+). In terms of biological role, specifically dimethylates two adjacent adenosines (A1518 and A1519) in the loop of a conserved hairpin near the 3'-end of 16S rRNA in the 30S particle. May play a critical role in biogenesis of 30S subunits. The protein is Ribosomal RNA small subunit methyltransferase A of Acidobacterium capsulatum (strain ATCC 51196 / DSM 11244 / BCRC 80197 / JCM 7670 / NBRC 15755 / NCIMB 13165 / 161).